A 455-amino-acid chain; its full sequence is Oxysterols receptor LXR-beta (455 aa).

The span at 1–10 shows a compositional bias: polar residues; it reads MSTPTTNSVD. The interval 1 to 53 is disordered; the sequence is MSTPTTNSVDTPLPGNGPSTPSSSPGGKEDGPEPCPGGADPDVPSTDGADSAS. A transactivation AF-1; required for ligand-independent transactivation function region spans residues 1 to 80; sequence MSTPTTNSVD…GPAPKMLGDE (80 aa). Residues 14–26 are compositionally biased toward low complexity; the sequence is PGNGPSTPSSSPG. A DNA-binding region (nuclear receptor) is located at residues 79-156; the sequence is DELCQVCGDT…AGMREQCVLS (78 aa). NR C4-type zinc fingers lie at residues 82–102 and 120–144; these read CQVC…CEGC and CRGG…LRKC. The disordered stretch occupies residues 164–210; that stretch reads KIRKQQQQQQQQSSPTGPGVSSSSPASGPGASPGGSDGGGQGSGEGE. Residues 168–193 show a composition bias toward low complexity; it reads QQQQQQQQSSPTGPGVSSSSPASGPG. Gly residues predominate over residues 194–210; it reads ASPGGSDGGGQGSGEGE. A transactivation AF-2; required for ligand-dependent transactivation function; mediates interaction with CCAR2 region spans residues 214–455; that stretch reads LTAAQELMIQ…LLSEIWDVHE (242 aa). In terms of domain architecture, NR LBD spans 217–455; sequence AQELMIQQLV…LLSEIWDVHE (239 aa). Residues Lys404 and Lys442 each participate in a glycyl lysine isopeptide (Lys-Gly) (interchain with G-Cter in SUMO2) cross-link.

It belongs to the nuclear hormone receptor family. NR1 subfamily. Forms a heterodimer with RXR. Interacts with CCAR2 (via N-terminus) in a ligand-independent manner. Interacts (when sumoylated) with GPS2; interaction with GPS2 onto hepatic acute phase protein promoters prevents N-Cor corepressor complex dissociation. Interacts with ABCA12 and ABCA1; this interaction is required for ABCA1 localization to the cell surface and is necessary for its normal activity and stability. Post-translationally, sumoylated by SUMO2 at Lys-404 and Lys-442 during the hepatic acute phase response, leading to promote interaction with GPS2 and prevent N-Cor corepressor complex dissociation.

The protein localises to the nucleus. Functionally, nuclear receptor that exhibits a ligand-dependent transcriptional activation activity. Binds preferentially to double-stranded oligonucleotide direct repeats having the consensus half-site sequence 5'-AGGTCA-3' and 4-nt spacing (DR-4). Regulates cholesterol uptake through MYLIP-dependent ubiquitination of LDLR, VLDLR and LRP8; DLDLR and LRP8. Interplays functionally with RORA for the regulation of genes involved in liver metabolism. Induces LPCAT3-dependent phospholipid remodeling in endoplasmic reticulum (ER) membranes of hepatocytes, driving SREBF1 processing and lipogenesis. Via LPCAT3, triggers the incorporation of arachidonate into phosphatidylcholines of ER membranes, increasing membrane dynamics and enabling triacylglycerols transfer to nascent very low-density lipoprotein (VLDL) particles. Via LPCAT3 also counteracts lipid-induced ER stress response and inflammation, likely by modulating SRC kinase membrane compartmentalization and limiting the synthesis of lipid inflammatory mediators. Plays an anti-inflammatory role during the hepatic acute phase response by acting as a corepressor: inhibits the hepatic acute phase response by preventing dissociation of the N-Cor corepressor complex. The chain is Oxysterols receptor LXR-beta (NR1H2) from Bos taurus (Bovine).